Consider the following 126-residue polypeptide: uncharacterized protein (126 aa).

The chain crosses the membrane as a helical span at residues 55–77 (MLLINSNLVLSGLLLFIDVYRAA).

The protein localises to the membrane. This is an uncharacterized protein from Dictyostelium discoideum (Social amoeba).